The sequence spans 231 residues: MEAAAKVQRQMVRLRGRSYVAFVFVPTVPILDWLQEIDATIARSPGFFAGRPVVIDLSSVDLSQSGINHLLTSLQDRNIRVLGIEGVEEGRLTPMMPPLLSGGRSCVVEPSAPKKVEKAEAKPTSLLLENPVRSGQTVIFPEGDVTILGSVGSGAEVVAGGSIHVYGALRGRAMAGVNGHTSARIYCQKIEAELLAIDGFYQTADDIDAALRGKPAQAWLQGNTMRITALN.

The protein belongs to the MinC family. As to quaternary structure, interacts with MinD and FtsZ.

In terms of biological role, cell division inhibitor that blocks the formation of polar Z ring septums. Rapidly oscillates between the poles of the cell to destabilize FtsZ filaments that have formed before they mature into polar Z rings. Prevents FtsZ polymerization. The protein is Probable septum site-determining protein MinC of Bradyrhizobium diazoefficiens (strain JCM 10833 / BCRC 13528 / IAM 13628 / NBRC 14792 / USDA 110).